The sequence spans 105 residues: Cell division protein FtsB (105 aa).

The Cytoplasmic segment spans residues 1–3 (MGK). A helical membrane pass occupies residues 4 to 21 (LTLLLLALLVWLQYSLWF). Residues 22–105 (GKNGLHDYTR…QASGQQQNNR (84 aa)) lie on the Periplasmic side of the membrane. Positions 33–62 (NDDVTAQQATNAKLKARNDQLFAEIDDLNG) form a coiled coil.

Belongs to the FtsB family. As to quaternary structure, part of a complex composed of FtsB, FtsL and FtsQ.

Its subcellular location is the cell inner membrane. In terms of biological role, essential cell division protein. May link together the upstream cell division proteins, which are predominantly cytoplasmic, with the downstream cell division proteins, which are predominantly periplasmic. In Klebsiella aerogenes (Enterobacter aerogenes), this protein is Cell division protein FtsB.